Consider the following 106-residue polypeptide: uncharacterized protein (106 aa).

This is an uncharacterized protein from Mycoplasma pneumoniae (strain ATCC 29342 / M129 / Subtype 1) (Mycoplasmoides pneumoniae).